A 367-amino-acid chain; its full sequence is Apolipoprotein A-V (367 aa).

Positions 1–20 (MAAVITWALALLSVFATVQA) are cleaved as a signal peptide. Phosphoserine is present on S52. A coiled-coil region spans residues 231-255 (TRKAKDLHTSIQRNLDQLRDELSTF). A disordered region spans residues 305 to 332 (EEIQHQLAPPPPSHSAFAPELGHSDSNK).

It belongs to the apolipoprotein A1/A4/E family. In terms of assembly, interacts with GPIHBP1. Interacts with SORL1; this interaction leads to APOA5 internalization and sorting either to lysosomes and degradation, or to the trans-Golgi network. Phosphorylated by FAM20C in the extracellular medium. Liver.

The protein localises to the secreted. It localises to the early endosome. Its subcellular location is the late endosome. The protein resides in the golgi apparatus. It is found in the trans-Golgi network. Minor apolipoprotein mainly associated with HDL and to a lesser extent with VLDL. May also be associated with chylomicrons. Important determinant of plasma triglyceride (TG) levels by both being a potent stimulator of apo-CII lipoprotein lipase (LPL) TG hydrolysis and an inhibitor of the hepatic VLDL-TG production rate (without affecting the VLDL-apoB production rate). Activates poorly lecithin:cholesterol acyltransferase (LCAT) and does not enhance efflux of cholesterol from macrophages. Binds heparin. This Rattus norvegicus (Rat) protein is Apolipoprotein A-V (Apoa5).